The following is a 343-amino-acid chain: tRNA N6-adenosine threonylcarbamoyltransferase (343 aa).

Residues histidine 111 and histidine 115 each coordinate Fe cation. Substrate contacts are provided by residues 133-137, aspartate 166, glycine 179, aspartate 183, and asparagine 273; that span reads AVSGG. Aspartate 301 lines the Fe cation pocket.

The protein belongs to the KAE1 / TsaD family. It depends on Fe(2+) as a cofactor.

The protein localises to the cytoplasm. The enzyme catalyses L-threonylcarbamoyladenylate + adenosine(37) in tRNA = N(6)-L-threonylcarbamoyladenosine(37) in tRNA + AMP + H(+). Functionally, required for the formation of a threonylcarbamoyl group on adenosine at position 37 (t(6)A37) in tRNAs that read codons beginning with adenine. Is involved in the transfer of the threonylcarbamoyl moiety of threonylcarbamoyl-AMP (TC-AMP) to the N6 group of A37, together with TsaE and TsaB. TsaD likely plays a direct catalytic role in this reaction. This chain is tRNA N6-adenosine threonylcarbamoyltransferase, found in Geotalea uraniireducens (strain Rf4) (Geobacter uraniireducens).